Reading from the N-terminus, the 133-residue chain is uncharacterized protein (133 aa).

The segment at residues 1–82 (MIDKIKKGYS…QKMLHDRQNF (82 aa)) is a DNA-binding region (recombinase).

This is an uncharacterized protein from Bacillus phage phi105 (Bacteriophage phi-105).